Reading from the N-terminus, the 122-residue chain is uncharacterized protein (122 aa).

Transmembrane regions (helical) follow at residues 21–40 (VWSW…SIAI), 57–77 (YTHM…CICI), and 94–114 (LLFS…YCIY).

Its subcellular location is the membrane. This is an uncharacterized protein from Saccharomyces cerevisiae (strain ATCC 204508 / S288c) (Baker's yeast).